The following is a 289-amino-acid chain: 4-diphosphocytidyl-2-C-methyl-D-erythritol kinase (289 aa).

Lys-11 is a catalytic residue. Residue 93–103 (PLAAGLAGGSA) coordinates ATP. The active site involves Asp-135.

Belongs to the GHMP kinase family. IspE subfamily.

It carries out the reaction 4-CDP-2-C-methyl-D-erythritol + ATP = 4-CDP-2-C-methyl-D-erythritol 2-phosphate + ADP + H(+). The protein operates within isoprenoid biosynthesis; isopentenyl diphosphate biosynthesis via DXP pathway; isopentenyl diphosphate from 1-deoxy-D-xylulose 5-phosphate: step 3/6. Functionally, catalyzes the phosphorylation of the position 2 hydroxy group of 4-diphosphocytidyl-2C-methyl-D-erythritol. The sequence is that of 4-diphosphocytidyl-2-C-methyl-D-erythritol kinase from Thermoanaerobacter pseudethanolicus (strain ATCC 33223 / 39E) (Clostridium thermohydrosulfuricum).